A 219-amino-acid polypeptide reads, in one-letter code: Ion-translocating oxidoreductase complex subunit G (219 aa).

A helical membrane pass occupies residues 25 to 45; sequence GLLLGLFSLVSALMLALASDA. FMN phosphoryl threonine is present on threonine 187.

The protein belongs to the RnfG family. In terms of assembly, the complex is composed of six subunits: RnfA, RnfB, RnfC, RnfD, RnfE and RnfG. The cofactor is FMN.

It localises to the cellular chromatophore membrane. Part of a membrane-bound complex that couples electron transfer with translocation of ions across the membrane. The protein is Ion-translocating oxidoreductase complex subunit G of Cereibacter sphaeroides (strain ATCC 17029 / ATH 2.4.9) (Rhodobacter sphaeroides).